Here is a 349-residue protein sequence, read N- to C-terminus: Putative phytanoyl-CoA dioxygenase (349 aa).

Residues K118 and 169–171 (HLD) each bind 2-oxoglutarate. 2 residues coordinate Fe cation: H169 and D171.

It belongs to the PhyH family. Fe cation serves as cofactor. L-ascorbate is required as a cofactor.

It carries out the reaction phytanoyl-CoA + 2-oxoglutarate + O2 = 2-hydroxyphytanoyl-CoA + succinate + CO2. It participates in lipid metabolism; fatty acid metabolism. In terms of biological role, converts phytanoyl-CoA to 2-hydroxyphytanoyl-CoA. The polypeptide is Putative phytanoyl-CoA dioxygenase (Dictyostelium discoideum (Social amoeba)).